The primary structure comprises 207 residues: NAD(P)H dehydrogenase (quinone) (207 aa).

In terms of domain architecture, Flavodoxin-like spans 3 to 194; that stretch reads VQIIFYSMYG…EMAKFQGRHV (192 aa). FMN is bound by residues 9–14 and 82–84; these read SMYGHI and TRF. Residue Tyr11 participates in NAD(+) binding. Residue Trp102 coordinates substrate. Residues 117-123 and His138 each bind FMN; that span reads STATQHG.

It belongs to the WrbA family. Requires FMN as cofactor.

The catalysed reaction is a quinone + NADH + H(+) = a quinol + NAD(+). The enzyme catalyses a quinone + NADPH + H(+) = a quinol + NADP(+). The sequence is that of NAD(P)H dehydrogenase (quinone) from Aromatoleum aromaticum (strain DSM 19018 / LMG 30748 / EbN1) (Azoarcus sp. (strain EbN1)).